The following is a 490-amino-acid chain: Betaine aldehyde dehydrogenase (490 aa).

D93 serves as a coordination point for K(+). 150-152 (GAW) is a binding site for NAD(+). The Charge relay system role is filled by K162. 176-179 (KPSE) serves as a coordination point for NAD(+). V180 is a K(+) binding site. 230–233 (GIAS) contacts NAD(+). Position 246 (L246) interacts with K(+). The Proton acceptor role is filled by E252. Positions 254, 286, and 387 each coordinate NAD(+). Residue C286 is the Nucleophile of the active site. Residue C286 is modified to Cysteine sulfenic acid (-SOH). The K(+) site is built by K457 and G460. E464 (charge relay system) is an active-site residue.

This sequence belongs to the aldehyde dehydrogenase family. As to quaternary structure, dimer of dimers. It depends on K(+) as a cofactor.

It catalyses the reaction betaine aldehyde + NAD(+) + H2O = glycine betaine + NADH + 2 H(+). The protein operates within amine and polyamine biosynthesis; betaine biosynthesis via choline pathway; betaine from betaine aldehyde: step 1/1. Functionally, involved in the biosynthesis of the osmoprotectant glycine betaine. Catalyzes the irreversible oxidation of betaine aldehyde to the corresponding acid. The sequence is that of Betaine aldehyde dehydrogenase from Yersinia pseudotuberculosis serotype O:3 (strain YPIII).